The chain runs to 142 residues: UPF0306 protein Ent638_3591 (142 aa).

The protein belongs to the UPF0306 family.

This is UPF0306 protein Ent638_3591 from Enterobacter sp. (strain 638).